A 123-amino-acid chain; its full sequence is uncharacterized protein (123 aa).

The segment at 1-28 (MGLGSSKRKEEPPHKSEPKTVGRVKRAG) is disordered. The span at 7 to 20 (KRKEEPPHKSEPKT) shows a compositional bias: basic and acidic residues.

It belongs to the TUSC2 family.

This is an uncharacterized protein from Caenorhabditis elegans.